The primary structure comprises 350 residues: Protein FAM118B (350 aa).

Residue A2 is modified to N-acetylalanine. S9 carries the phosphoserine modification.

It belongs to the FAM118 family.

It localises to the nucleus. Its subcellular location is the cajal body. May play a role in Cajal bodies formation. The chain is Protein FAM118B (FAM118B) from Macaca fascicularis (Crab-eating macaque).